The following is a 166-amino-acid chain: Disulfide bond formation protein B (166 aa).

At 1–11 (MCNKLFAGRRG) the chain is on the cytoplasmic side. A helical membrane pass occupies residues 12–28 (YFLGFVASFGLVGLALF). Residues 29–46 (LQQKYNLEPCPLCISQRI) lie on the Periplasmic side of the membrane. Cysteines 38 and 41 form a disulfide. The helical transmembrane segment at 47-63 (AFMALGILFLLAALHNP) threads the bilayer. At 64–69 (GRVGRK) the chain is on the cytoplasmic side. Residues 70 to 87 (VYGLLHVIAAATGIGIAA) form a helical membrane-spanning segment. Residues 88-144 (RHIWIQANPDKVMAECGAGFDYIMETFPLKKALDLIFKGTGECSAIDWTLFGLTIPQ) lie on the Periplasmic side of the membrane. Cys-103 and Cys-130 are joined by a disulfide. The chain crosses the membrane as a helical span at residues 145 to 163 (LSLIAFVGLGLFAVLLAFH). The Cytoplasmic portion of the chain corresponds to 164-166 (KKA).

The protein belongs to the DsbB family.

Its subcellular location is the cell inner membrane. In terms of biological role, required for disulfide bond formation in some periplasmic proteins. Acts by oxidizing the DsbA protein. The sequence is that of Disulfide bond formation protein B from Methylobacillus flagellatus (strain ATCC 51484 / DSM 6875 / VKM B-1610 / KT).